We begin with the raw amino-acid sequence, 785 residues long: Polyribonucleotide nucleotidyltransferase (785 aa).

2 residues coordinate Mg(2+): Asp-516 and Asp-522. The 60-residue stretch at 582 to 641 (PRVTTVKIPVDKIGMVIGPKGQTINAIQDETGAEISIEDDGTIYVGATNGPAAQAAVERI) folds into the KH domain. Residues 653–722 (GDRFLGTVVK…QRGKIYLDKV (70 aa)) form the S1 motif domain. Residues 722 to 785 (VRPEGAEAPA…SRPRRRTRRS (64 aa)) form a disordered region. Residues 734–764 (AAERPAGRDRGDRGPRDRGDRGGRGPDRGDS) show a composition bias toward basic and acidic residues.

It belongs to the polyribonucleotide nucleotidyltransferase family. It depends on Mg(2+) as a cofactor.

The protein resides in the cytoplasm. The catalysed reaction is RNA(n+1) + phosphate = RNA(n) + a ribonucleoside 5'-diphosphate. Its function is as follows. Involved in mRNA degradation. Catalyzes the phosphorolysis of single-stranded polyribonucleotides processively in the 3'- to 5'-direction. This Salinispora tropica (strain ATCC BAA-916 / DSM 44818 / JCM 13857 / NBRC 105044 / CNB-440) protein is Polyribonucleotide nucleotidyltransferase.